Reading from the N-terminus, the 284-residue chain is Nucleotide-binding protein SO_3964 (284 aa).

8 to 15 serves as a coordination point for ATP; it reads GRSGSGKS. Position 56 to 59 (56 to 59) interacts with GTP; the sequence is DVRN.

Belongs to the RapZ-like family.

Its function is as follows. Displays ATPase and GTPase activities. The chain is Nucleotide-binding protein SO_3964 from Shewanella oneidensis (strain ATCC 700550 / JCM 31522 / CIP 106686 / LMG 19005 / NCIMB 14063 / MR-1).